A 361-amino-acid polypeptide reads, in one-letter code: Cell cycle control protein 50A (361 aa).

The disordered stretch occupies residues 1–28 (MAMNYNAKDEVDGGPPCPPGGTAKTRRP). Alanine 2 carries the post-translational modification N-acetylalanine. The segment at 2 to 48 (AMNYNAKDEVDGGPPCPPGGTAKTRRPDNTAFKQQRLPAWQPILTAG) is required for ATPase and aminophospholipid flippase activity. Residues 2 to 49 (AMNYNAKDEVDGGPPCPPGGTAKTRRPDNTAFKQQRLPAWQPILTAGT) lie on the Cytoplasmic side of the membrane. Positions 49 to 348 (TVLPTFFIIG…LGVVLLVINH (300 aa)) are interaction with ATP8A2. A helical transmembrane segment spans residues 50–70 (VLPTFFIIGLIFIPIGIGIFV). At 71–325 (TSNNIREIEI…SWMGGKNPFL (255 aa)) the chain is on the exoplasmic loop side. 3 disulfides stabilise this stretch: cysteine 91-cysteine 104, cysteine 94-cysteine 102, and cysteine 157-cysteine 171. Asparagine 180, asparagine 190, and asparagine 294 each carry an N-linked (GlcNAc...) asparagine glycan. The chain crosses the membrane as a helical span at residues 326 to 346 (GIAYITIGSISFLLGVVLLVI). Residues 347-361 (NHKYRNSSNTADITI) are Cytoplasmic-facing.

This sequence belongs to the CDC50/LEM3 family. Component of various P4-ATPase flippase complexes which consists of a catalytic alpha subunit and an accessory beta subunit. Interacts with ATP8A1 to form a flippase complex; this complex forms an intermediate phosphoenzyme. Interacts with ATP8A2 to form a flippase complex. ATP8B1:TMEM30A and ATP8B2:TMEM30A flippase complexes have been shown to form intermediate phosphoenzymes in vitro. Interacts with alpha subunits ATP8A1, ATP8B1, ATP8B2, ATP8B4, ATP10A, ATP10B, ATP10D, ATP11A, ATP11B and ATP11C. Post-translationally, N-glycosylated; contributes to ATP8A2:TMEM30A flippase complex assembly but not to functional activity. As to expression, expressed in photoreceptor cells; detected in retina outer segment and other retinal layers (at protein level).

The protein localises to the membrane. The protein resides in the golgi apparatus. It is found in the cytoplasmic vesicle. Its subcellular location is the secretory vesicle membrane. It localises to the apical cell membrane. The protein localises to the photoreceptor inner segment. The protein resides in the cell projection. It is found in the cilium. Its subcellular location is the photoreceptor outer segment. Its function is as follows. Accessory component of a P4-ATPase flippase complex which catalyzes the hydrolysis of ATP coupled to the transport of aminophospholipids from the outer to the inner leaflet of various membranes and ensures the maintenance of asymmetric distribution of phospholipids. Phospholipid translocation also seems to be implicated in vesicle formation and in uptake of lipid signaling molecules. The beta subunit may assist in binding of the phospholipid substrate. Required for the proper folding, assembly and ER to Golgi exit of the ATP8A2:TMEM30A flippase complex. ATP8A2:TMEM30A may be involved in regulation of neurite outgrowth, and, reconstituted to liposomes, predomiminantly transports phosphatidylserine (PS) and to a lesser extent phosphatidylethanolamine (PE). The ATP8A1:TMEM30A flippase complex seems to play a role in regulation of cell migration probably involving flippase-mediated translocation of phosphatidylethanolamine (PE) at the plasma membrane. Required for the formation of the ATP8A2, ATP8B1 and ATP8B2 P-type ATPAse intermediate phosphoenzymes. Involved in uptake of platelet-activating factor (PAF). Can also mediate the export of alpha subunits ATP8A1, ATP8B1, ATP8B2, ATP8B4, ATP10A, ATP10B, ATP10D, ATP11A, ATP11B and ATP11C from the ER to other membrane localizations. This is Cell cycle control protein 50A from Bos taurus (Bovine).